A 316-amino-acid polypeptide reads, in one-letter code: Apolipoprotein E (316 aa).

The N-terminal stretch at 1-18 (MKVLWVAVVVALLAGCQA) is a signal peptide. A run of 8 repeats spans residues 79–100 (ALME…GQLG), 101–122 (PMAQ…ARLG), 123–144 (SDME…AMLG), 145–166 (QSTE…KRLL), 167–188 (RDAD…EGAE), 189–210 (RSLS…SRAA), 211–232 (TLST…QKLH), and 233–254 (GRLE…QQLE). The interval 79–254 (ALMEETMKEV…RLDKIRQQLE (176 aa)) is 8 X 22 AA approximate tandem repeats. Methionine sulfoxide is present on Met142. Ser146 is subject to Phosphoserine; by FAM20C. The interval 157–167 (HLRKLRKRLLR) is LDL and other lipoprotein receptors binding. 161–164 (LRKR) provides a ligand contact to heparin. The lipid-binding and lipoprotein association stretch occupies residues 209–289 (AATLSTLAGQ…SWFEPLVEDM (81 aa)). Residue Thr211 is glycosylated (O-linked (GalNAc...) threonine). 228 to 235 (RQKLHGRL) is a heparin binding site. Residues 265–316 (NQMRLQAEAFQARLRSWFEPLVEDMQRQWAGLVEKVQLALRPSPTSPPSENH) are homooligomerization. The tract at residues 277–289 (RLRSWFEPLVEDM) is specificity for association with VLDL.

This sequence belongs to the apolipoprotein A1/A4/E family. As to quaternary structure, homotetramer. May interact with ABCA1; functionally associated with ABCA1 in the biogenesis of HDLs. May interact with APP/A4 amyloid-beta peptide; the interaction is extremely stable in vitro but its physiological significance is unclear. May interact with MAPT. May interact with MAP2. In the cerebrospinal fluid, interacts with secreted SORL1. Interacts with PMEL; this allows the loading of PMEL luminal fragment on ILVs to induce fibril nucleation. Post-translationally, APOE exists as multiple glycosylated and sialylated glycoforms within cells and in plasma. The extent of glycosylation and sialylation are tissue and context specific. In terms of processing, glycated in plasma VLDL. Phosphorylated by FAM20C in the extracellular medium.

It localises to the secreted. The protein localises to the extracellular space. Its subcellular location is the extracellular matrix. It is found in the extracellular vesicle. The protein resides in the endosome. It localises to the multivesicular body. Functionally, APOE is an apolipoprotein, a protein associating with lipid particles, that mainly functions in lipoprotein-mediated lipid transport between organs via the plasma and interstitial fluids. APOE is a core component of plasma lipoproteins and is involved in their production, conversion and clearance. Apolipoproteins are amphipathic molecules that interact both with lipids of the lipoprotein particle core and the aqueous environment of the plasma. As such, APOE associates with chylomicrons, chylomicron remnants, very low density lipoproteins (VLDL) and intermediate density lipoproteins (IDL) but shows a preferential binding to high-density lipoproteins (HDL). It also binds a wide range of cellular receptors including the LDL receptor/LDLR and the very low-density lipoprotein receptor/VLDLR that mediate the cellular uptake of the APOE-containing lipoprotein particles. Finally, APOE also has a heparin-binding activity and binds heparan-sulfate proteoglycans on the surface of cells, a property that supports the capture and the receptor-mediated uptake of APOE-containing lipoproteins by cells. The sequence is that of Apolipoprotein E (APOE) from Bos mutus grunniens (Wild yak).